The following is a 372-amino-acid chain: Queuine tRNA-ribosyltransferase (372 aa).

Residue D92 is the Proton acceptor of the active site. Residues 92–96, D146, Q188, and G215 contribute to the substrate site; that span reads DSGGY. The tract at residues 246-252 is RNA binding; that stretch reads GIGSLRE. D265 functions as the Nucleophile in the catalytic mechanism. The tract at residues 270–274 is RNA binding; important for wobble base 34 recognition; sequence TRLGR. C303, C305, C308, and H334 together coordinate Zn(2+).

It belongs to the queuine tRNA-ribosyltransferase family. As to quaternary structure, homodimer. Within each dimer, one monomer is responsible for RNA recognition and catalysis, while the other monomer binds to the replacement base PreQ1. The cofactor is Zn(2+).

It carries out the reaction 7-aminomethyl-7-carbaguanine + guanosine(34) in tRNA = 7-aminomethyl-7-carbaguanosine(34) in tRNA + guanine. Its pathway is tRNA modification; tRNA-queuosine biosynthesis. Functionally, catalyzes the base-exchange of a guanine (G) residue with the queuine precursor 7-aminomethyl-7-deazaguanine (PreQ1) at position 34 (anticodon wobble position) in tRNAs with GU(N) anticodons (tRNA-Asp, -Asn, -His and -Tyr). Catalysis occurs through a double-displacement mechanism. The nucleophile active site attacks the C1' of nucleotide 34 to detach the guanine base from the RNA, forming a covalent enzyme-RNA intermediate. The proton acceptor active site deprotonates the incoming PreQ1, allowing a nucleophilic attack on the C1' of the ribose to form the product. After dissociation, two additional enzymatic reactions on the tRNA convert PreQ1 to queuine (Q), resulting in the hypermodified nucleoside queuosine (7-(((4,5-cis-dihydroxy-2-cyclopenten-1-yl)amino)methyl)-7-deazaguanosine). This chain is Queuine tRNA-ribosyltransferase, found in Prochlorococcus marinus (strain MIT 9312).